The chain runs to 344 residues: MVRRLSEIAGLLGLELRGEDREVSGVNTLEAAGPDEISFLANPRYMGQLSTTRAGAVIVAAEHAQDVAVALVSANPYFDFGRTLALFARKQGSFEGVSEQAVVHPEAVVGEGCAVYPHVYIGPRARIGAGTVLFPGCYIGEDCVVGGGCTLYPNVVLMAGVEIGDDCILHAGVVLGADGFGFARTEFGIQKIPQVGTVRIGSDVEIGANTTIDRSVLGVTTVGDGTKIDNLVMLGHNVEMGRNCLIVSQVGISGSTKVGDDVTMAGQVGVAGHLSIGSGVTIGPKSGVAKDIPAGETVGGAPAVDKSTYMRTLTVMPKLPDMYKRLGKLEKELAELKKSLSEEQ.

Residue His-236 is the Proton acceptor of the active site.

It belongs to the transferase hexapeptide repeat family. LpxD subfamily. In terms of assembly, homotrimer.

It catalyses the reaction a UDP-3-O-[(3R)-3-hydroxyacyl]-alpha-D-glucosamine + a (3R)-hydroxyacyl-[ACP] = a UDP-2-N,3-O-bis[(3R)-3-hydroxyacyl]-alpha-D-glucosamine + holo-[ACP] + H(+). It functions in the pathway bacterial outer membrane biogenesis; LPS lipid A biosynthesis. In terms of biological role, catalyzes the N-acylation of UDP-3-O-acylglucosamine using 3-hydroxyacyl-ACP as the acyl donor. Is involved in the biosynthesis of lipid A, a phosphorylated glycolipid that anchors the lipopolysaccharide to the outer membrane of the cell. The protein is UDP-3-O-acylglucosamine N-acyltransferase of Nitratidesulfovibrio vulgaris (strain ATCC 29579 / DSM 644 / CCUG 34227 / NCIMB 8303 / VKM B-1760 / Hildenborough) (Desulfovibrio vulgaris).